Reading from the N-terminus, the 256-residue chain is Small ribosomal subunit protein eS1 (256 aa).

Ala-2 is subject to N-acetylalanine; partial.

The protein belongs to the eukaryotic ribosomal protein eS1 family. As to quaternary structure, component of the small ribosomal subunit. Mature ribosomes consist of a small (40S) and a large (60S) subunit. The 40S subunit contains about 33 different proteins and 1 molecule of RNA (18S). The 60S subunit contains about 49 different proteins and 3 molecules of RNA (25S, 5.8S and 5S).

It localises to the cytoplasm. The sequence is that of Small ribosomal subunit protein eS1 from Coprinopsis cinerea (strain Okayama-7 / 130 / ATCC MYA-4618 / FGSC 9003) (Inky cap fungus).